The following is a 352-amino-acid chain: MSKFFSLSLVAVVVAGGLTLYWRWPAAVPEAQPATTVAVPSRQSLIEQASTSPAKAPAEAQPSIAVTLPSLAGTEVDGQLRTDAAGNLLLDLAVRDYFDYFLSAVDHSGLDAVIEALLADAGRRLPEPALGQMISLLGDYLDYKRASMALMQQPLDARQQVEPQAQLQALQSAFARLDELRRAHFSATAQEALFGAEQAYARYTLDSLAVQQRDDLGEAQRTQLLEQLRERLPDALRESEQRQQLAQEQLQRSEQLWRDGADEQQVREFLAMTYDPDTVQRLLDEQRRERDWQQHYQAYRNELASLQGRGLSEADGEQLQRQLRERLFSSEDRHRVETYDAIAAKQPEPLDP.

The helical transmembrane segment at 7 to 28 threads the bilayer; the sequence is LSLVAVVVAGGLTLYWRWPAAV.

This sequence belongs to the lipase chaperone family.

Its subcellular location is the cell inner membrane. In terms of biological role, may be involved in the folding of the extracellular lipase during its passage through the periplasm. The sequence is that of Lipase chaperone (lifO) from Pseudomonas wisconsinensis.